The primary structure comprises 343 residues: Heat-inducible transcription repressor HrcA (343 aa).

This sequence belongs to the HrcA family.

In terms of biological role, negative regulator of class I heat shock genes (grpE-dnaK-dnaJ and groELS operons). Prevents heat-shock induction of these operons. This Bacillus pumilus (strain SAFR-032) protein is Heat-inducible transcription repressor HrcA.